Consider the following 505-residue polypeptide: Lysine--tRNA ligase (505 aa).

Residues glutamate 415 and glutamate 422 each contribute to the Mg(2+) site.

The protein belongs to the class-II aminoacyl-tRNA synthetase family. In terms of assembly, homodimer. The cofactor is Mg(2+).

The protein resides in the cytoplasm. It carries out the reaction tRNA(Lys) + L-lysine + ATP = L-lysyl-tRNA(Lys) + AMP + diphosphate. This is Lysine--tRNA ligase from Enterobacter sp. (strain 638).